Here is a 330-residue protein sequence, read N- to C-terminus: (4-{4-[2-(gamma-L-glutamylamino)ethyl]phenoxymethyl}furan-2-yl)methanamine synthase (330 aa).

This sequence belongs to the MfnF family.

It carries out the reaction gamma-L-glutamyltyramine + [5-(aminomethyl)furan-3-yl]methyl diphosphate = (4-{4-[2-(gamma-L-glutamylamino)ethyl]phenoxymethyl}furan-2-yl)methanamine + diphosphate. It participates in cofactor biosynthesis; methanofuran biosynthesis. In terms of biological role, catalyzes the condensation between 5-(aminomethyl)-3-furanmethanol diphosphate (F1-PP) and gamma-glutamyltyramine to produce APMF-Glu. This is (4-{4-[2-(gamma-L-glutamylamino)ethyl]phenoxymethyl}furan-2-yl)methanamine synthase from Methanocaldococcus jannaschii (strain ATCC 43067 / DSM 2661 / JAL-1 / JCM 10045 / NBRC 100440) (Methanococcus jannaschii).